A 103-amino-acid chain; its full sequence is Gibberellin-regulated protein 13 (103 aa).

A signal peptide spans 1 to 20 (MATKLSIIVFSIVVLHLLLS).

It belongs to the GASA family. Six disulfide bonds may be present.

It localises to the secreted. Its function is as follows. Gibberellin-regulated protein that may function in hormonal controlled steps of development such as seed germination, flowering and seed maturation. This chain is Gibberellin-regulated protein 13 (GASA13), found in Arabidopsis thaliana (Mouse-ear cress).